The chain runs to 177 residues: ATP synthase subunit delta (177 aa).

It belongs to the ATPase delta chain family. As to quaternary structure, F-type ATPases have 2 components, F(1) - the catalytic core - and F(0) - the membrane proton channel. F(1) has five subunits: alpha(3), beta(3), gamma(1), delta(1), epsilon(1). F(0) has three main subunits: a(1), b(2) and c(10-14). The alpha and beta chains form an alternating ring which encloses part of the gamma chain. F(1) is attached to F(0) by a central stalk formed by the gamma and epsilon chains, while a peripheral stalk is formed by the delta and b chains.

The protein resides in the cell inner membrane. Its function is as follows. F(1)F(0) ATP synthase produces ATP from ADP in the presence of a proton or sodium gradient. F-type ATPases consist of two structural domains, F(1) containing the extramembraneous catalytic core and F(0) containing the membrane proton channel, linked together by a central stalk and a peripheral stalk. During catalysis, ATP synthesis in the catalytic domain of F(1) is coupled via a rotary mechanism of the central stalk subunits to proton translocation. In terms of biological role, this protein is part of the stalk that links CF(0) to CF(1). It either transmits conformational changes from CF(0) to CF(1) or is implicated in proton conduction. In Azobacteroides pseudotrichonymphae genomovar. CFP2, this protein is ATP synthase subunit delta.